A 230-amino-acid polypeptide reads, in one-letter code: Probable thioesterase YBR096W (230 aa).

It belongs to the lcsJ thioesterase family.

This Saccharomyces cerevisiae (strain ATCC 204508 / S288c) (Baker's yeast) protein is Probable thioesterase YBR096W.